A 483-amino-acid polypeptide reads, in one-letter code: Probable glycine dehydrogenase (decarboxylating) subunit 2 (483 aa).

The residue at position 267 (lysine 267) is an N6-(pyridoxal phosphate)lysine.

It belongs to the GcvP family. C-terminal subunit subfamily. As to quaternary structure, the glycine cleavage system is composed of four proteins: P, T, L and H. In this organism, the P 'protein' is a heterodimer of two subunits. Pyridoxal 5'-phosphate serves as cofactor.

It catalyses the reaction N(6)-[(R)-lipoyl]-L-lysyl-[glycine-cleavage complex H protein] + glycine + H(+) = N(6)-[(R)-S(8)-aminomethyldihydrolipoyl]-L-lysyl-[glycine-cleavage complex H protein] + CO2. Its function is as follows. The glycine cleavage system catalyzes the degradation of glycine. The P protein binds the alpha-amino group of glycine through its pyridoxal phosphate cofactor; CO(2) is released and the remaining methylamine moiety is then transferred to the lipoamide cofactor of the H protein. This Kosmotoga olearia (strain ATCC BAA-1733 / DSM 21960 / TBF 19.5.1) protein is Probable glycine dehydrogenase (decarboxylating) subunit 2.